Consider the following 518-residue polypeptide: Serine hydroxymethyltransferase, mitochondrial (518 aa).

A mitochondrion-targeting transit peptide spans Met-1–Ser-31. Position 287 is an N6-(pyridoxal phosphate)lysine (Lys-287).

It belongs to the SHMT family. As to quaternary structure, homotetramer. Pyridoxal 5'-phosphate is required as a cofactor.

It localises to the mitochondrion. The catalysed reaction is (6R)-5,10-methylene-5,6,7,8-tetrahydrofolate + glycine + H2O = (6S)-5,6,7,8-tetrahydrofolate + L-serine. It participates in one-carbon metabolism; tetrahydrofolate interconversion. In terms of biological role, catalyzes the interconversion of serine and glycine. This chain is Serine hydroxymethyltransferase, mitochondrial, found in Pisum sativum (Garden pea).